Consider the following 356-residue polypeptide: S-adenosylmethionine:tRNA ribosyltransferase-isomerase (356 aa).

It belongs to the QueA family. As to quaternary structure, monomer.

The protein localises to the cytoplasm. It carries out the reaction 7-aminomethyl-7-carbaguanosine(34) in tRNA + S-adenosyl-L-methionine = epoxyqueuosine(34) in tRNA + adenine + L-methionine + 2 H(+). The protein operates within tRNA modification; tRNA-queuosine biosynthesis. Transfers and isomerizes the ribose moiety from AdoMet to the 7-aminomethyl group of 7-deazaguanine (preQ1-tRNA) to give epoxyqueuosine (oQ-tRNA). This Yersinia pestis protein is S-adenosylmethionine:tRNA ribosyltransferase-isomerase.